Consider the following 193-residue polypeptide: Adenine phosphoribosyltransferase (193 aa).

Belongs to the purine/pyrimidine phosphoribosyltransferase family. In terms of assembly, homodimer.

The protein localises to the cytoplasm. The enzyme catalyses AMP + diphosphate = 5-phospho-alpha-D-ribose 1-diphosphate + adenine. Its pathway is purine metabolism; AMP biosynthesis via salvage pathway; AMP from adenine: step 1/1. Functionally, catalyzes a salvage reaction resulting in the formation of AMP, that is energically less costly than de novo synthesis. The chain is Adenine phosphoribosyltransferase from Bifidobacterium adolescentis (strain ATCC 15703 / DSM 20083 / NCTC 11814 / E194a).